A 196-amino-acid polypeptide reads, in one-letter code: Nucleoid occlusion factor SlmA (196 aa).

The HTH tetR-type domain maps to 7-68; sequence PNRRDEILQA…GLIEFIEESI (62 aa). The H-T-H motif DNA-binding region spans 31-50; it reads TTAKLAKQVGVSEAALYRHF. A coiled-coil region spans residues 71–93; sequence RVNRILEDEKDTLKRIELLLKLL.

The protein belongs to the nucleoid occlusion factor SlmA family. In terms of assembly, homodimer. Interacts with FtsZ.

The protein resides in the cytoplasm. It localises to the nucleoid. Its function is as follows. Required for nucleoid occlusion (NO) phenomenon, which prevents Z-ring formation and cell division over the nucleoid. Acts as a DNA-associated cell division inhibitor that binds simultaneously chromosomal DNA and FtsZ, and disrupts the assembly of FtsZ polymers. SlmA-DNA-binding sequences (SBS) are dispersed on non-Ter regions of the chromosome, preventing FtsZ polymerization at these regions. The polypeptide is Nucleoid occlusion factor SlmA (Aliivibrio fischeri (strain MJ11) (Vibrio fischeri)).